The sequence spans 471 residues: MGIARWLNRTVGFFVFALLDIADFLLCYTYKTLDYFLESERKPCYCSSPPEAKAKTEKIIVSERGGYSKVVSLTRSKIHFDEISDTLYSRGPSLLTRLSKLVRSVKCFNYKGLIMRGNVVESCDHHESKKKISKGKKRLMTLNSTVIEKSSTAPRWSDCHCSFCTSWLTSTNRDSLFVKVQQPKDNKKARDNVVFIHGFVSSSAFWTETLFPNFSDSAKSNYRFIAVDLLGYGRSPKPNDSLYTLREHLEMIEKSVISKFKLKTFHIVAHSLGCILALALAVKHPGAIKSLTLLAPPYYKVPKGVQPAQYVMREVARKEVWPPMQFGASVLSWYEHLGRTIGLVLIKNHQLIEFVTRLLTLNRMRTYLIEGFLCHTHNGSFHTLHNIIFGSGAKLDSYLDHVRDHVDCDVAIFHGGKDELIPVECSYSVKSKVPRATVHVIPDKDHITIVVGRQKDFARELELIWQRTKST.

The signal sequence occupies residues 1 to 45 (MGIARWLNRTVGFFVFALLDIADFLLCYTYKTLDYFLESERKPCY). Cys46 is lipidated: N-palmitoyl cysteine. Residues 193-296 (VVFIHGFVSS…AIKSLTLLAP (104 aa)) form the AB hydrolase-1 domain. Residue His197 is part of the active site. Ser271 functions as the Nucleophile in the catalytic mechanism. Catalysis depends on charge relay system residues Asp418 and His446.

It is found in the cell membrane. The protein localises to the secreted. It localises to the cell wall. In terms of biological role, involved in cuticle development and morphogenesis. The chain is Probable lysophospholipase BODYGUARD 2 from Arabidopsis thaliana (Mouse-ear cress).